The sequence spans 202 residues: Peptide deformylase 2 (202 aa).

Fe cation contacts are provided by cysteine 123 and histidine 165. The active site involves glutamate 166. Fe cation is bound at residue histidine 169.

The protein belongs to the polypeptide deformylase family. The cofactor is Fe(2+).

It carries out the reaction N-terminal N-formyl-L-methionyl-[peptide] + H2O = N-terminal L-methionyl-[peptide] + formate. Its function is as follows. Removes the formyl group from the N-terminal Met of newly synthesized proteins. Requires at least a dipeptide for an efficient rate of reaction. N-terminal L-methionine is a prerequisite for activity but the enzyme has broad specificity at other positions. In Vibrio vulnificus (strain YJ016), this protein is Peptide deformylase 2.